Reading from the N-terminus, the 343-residue chain is Holliday junction branch migration complex subunit RuvB (343 aa).

Residues 4-184 (SDRLISAKAG…FGIVQRLEFY (181 aa)) are large ATPase domain (RuvB-L). Residues Ile23, Arg24, Gly65, Lys68, Thr69, Thr70, 131–133 (EDY), Arg174, Tyr184, and Arg221 each bind ATP. Thr69 contributes to the Mg(2+) binding site. The tract at residues 185-255 (NHQDLTHIIT…IADQALNMLK (71 aa)) is small ATPAse domain (RuvB-S). The segment at 258–343 (SQGFDHMDRR…RSGREDDLFE (86 aa)) is head domain (RuvB-H). Positions 294, 313, and 318 each coordinate DNA.

The protein belongs to the RuvB family. Homohexamer. Forms an RuvA(8)-RuvB(12)-Holliday junction (HJ) complex. HJ DNA is sandwiched between 2 RuvA tetramers; dsDNA enters through RuvA and exits via RuvB. An RuvB hexamer assembles on each DNA strand where it exits the tetramer. Each RuvB hexamer is contacted by two RuvA subunits (via domain III) on 2 adjacent RuvB subunits; this complex drives branch migration. In the full resolvosome a probable DNA-RuvA(4)-RuvB(12)-RuvC(2) complex forms which resolves the HJ.

It is found in the cytoplasm. The catalysed reaction is ATP + H2O = ADP + phosphate + H(+). Its function is as follows. The RuvA-RuvB-RuvC complex processes Holliday junction (HJ) DNA during genetic recombination and DNA repair, while the RuvA-RuvB complex plays an important role in the rescue of blocked DNA replication forks via replication fork reversal (RFR). RuvA specifically binds to HJ cruciform DNA, conferring on it an open structure. The RuvB hexamer acts as an ATP-dependent pump, pulling dsDNA into and through the RuvAB complex. RuvB forms 2 homohexamers on either side of HJ DNA bound by 1 or 2 RuvA tetramers; 4 subunits per hexamer contact DNA at a time. Coordinated motions by a converter formed by DNA-disengaged RuvB subunits stimulates ATP hydrolysis and nucleotide exchange. Immobilization of the converter enables RuvB to convert the ATP-contained energy into a lever motion, pulling 2 nucleotides of DNA out of the RuvA tetramer per ATP hydrolyzed, thus driving DNA branch migration. The RuvB motors rotate together with the DNA substrate, which together with the progressing nucleotide cycle form the mechanistic basis for DNA recombination by continuous HJ branch migration. Branch migration allows RuvC to scan DNA until it finds its consensus sequence, where it cleaves and resolves cruciform DNA. The sequence is that of Holliday junction branch migration complex subunit RuvB from Marinobacter nauticus (strain ATCC 700491 / DSM 11845 / VT8) (Marinobacter aquaeolei).